The chain runs to 143 residues: Transthyretin-like protein 33 (143 aa).

An N-terminal signal peptide occupies residues 1 to 20 (MSRLACISSLFILCAIGSEA).

Belongs to the nematode transthyretin-like family. Expressed in head cells next to and anterior of the first pharyngeal bulb, the pharynx, and the hypodermis.

The protein localises to the secreted. Its function is as follows. Protects dopaminergic neurons from degeneration caused by oxidative stress. The protein is Transthyretin-like protein 33 of Caenorhabditis elegans.